Reading from the N-terminus, the 315-residue chain is Ribose-phosphate pyrophosphokinase (315 aa).

ATP contacts are provided by residues 37–39 and 96–97; these read DGE and RQ. Mg(2+) contacts are provided by H131 and D170. K194 is a catalytic residue. D-ribose 5-phosphate-binding positions include R196, D220, and 224–228; that span reads DTGGT.

Belongs to the ribose-phosphate pyrophosphokinase family. Class I subfamily. In terms of assembly, homohexamer. Mg(2+) serves as cofactor.

It is found in the cytoplasm. The catalysed reaction is D-ribose 5-phosphate + ATP = 5-phospho-alpha-D-ribose 1-diphosphate + AMP + H(+). Its pathway is metabolic intermediate biosynthesis; 5-phospho-alpha-D-ribose 1-diphosphate biosynthesis; 5-phospho-alpha-D-ribose 1-diphosphate from D-ribose 5-phosphate (route I): step 1/1. In terms of biological role, involved in the biosynthesis of the central metabolite phospho-alpha-D-ribosyl-1-pyrophosphate (PRPP) via the transfer of pyrophosphoryl group from ATP to 1-hydroxyl of ribose-5-phosphate (Rib-5-P). The chain is Ribose-phosphate pyrophosphokinase from Buchnera aphidicola subsp. Schizaphis graminum (strain Sg).